A 154-amino-acid chain; its full sequence is SsrA-binding protein (154 aa).

The segment at 126–154 (GKKKYDKREDMKKKEAQREVERAFRERQK) is disordered. Over residues 131 to 154 (DKREDMKKKEAQREVERAFRERQK) the composition is skewed to basic and acidic residues.

The protein belongs to the SmpB family.

It localises to the cytoplasm. Functionally, required for rescue of stalled ribosomes mediated by trans-translation. Binds to transfer-messenger RNA (tmRNA), required for stable association of tmRNA with ribosomes. tmRNA and SmpB together mimic tRNA shape, replacing the anticodon stem-loop with SmpB. tmRNA is encoded by the ssrA gene; the 2 termini fold to resemble tRNA(Ala) and it encodes a 'tag peptide', a short internal open reading frame. During trans-translation Ala-aminoacylated tmRNA acts like a tRNA, entering the A-site of stalled ribosomes, displacing the stalled mRNA. The ribosome then switches to translate the ORF on the tmRNA; the nascent peptide is terminated with the 'tag peptide' encoded by the tmRNA and targeted for degradation. The ribosome is freed to recommence translation, which seems to be the essential function of trans-translation. This is SsrA-binding protein from Anoxybacillus flavithermus (strain DSM 21510 / WK1).